Here is a 173-residue protein sequence, read N- to C-terminus: dCTP deaminase, dUMP-forming (173 aa).

Residues 93 to 98 (RSSTGR), aspartate 111, 119 to 121 (TLE), glutamine 138, and tyrosine 151 each bind dCTP. Residue glutamate 121 is the Proton donor/acceptor of the active site.

It belongs to the dCTP deaminase family. As to quaternary structure, homotrimer.

It carries out the reaction dCTP + 2 H2O = dUMP + NH4(+) + diphosphate. Its pathway is pyrimidine metabolism; dUMP biosynthesis; dUMP from dCTP: step 1/1. Functionally, bifunctional enzyme that catalyzes both the deamination of dCTP to dUTP and the hydrolysis of dUTP to dUMP without releasing the toxic dUTP intermediate. The chain is dCTP deaminase, dUMP-forming from Clostridium beijerinckii (strain ATCC 51743 / NCIMB 8052) (Clostridium acetobutylicum).